The chain runs to 89 residues: MSVADIKKSEIVAQFQRAQGDTGSPEVQVALLTARINELTGHFKEHMKDHHSRRGLLRMVSRRRKLLDYLKGRNPDSYRALIEKLGLRK.

The protein belongs to the universal ribosomal protein uS15 family. Part of the 30S ribosomal subunit. Forms a bridge to the 50S subunit in the 70S ribosome, contacting the 23S rRNA.

Functionally, one of the primary rRNA binding proteins, it binds directly to 16S rRNA where it helps nucleate assembly of the platform of the 30S subunit by binding and bridging several RNA helices of the 16S rRNA. In terms of biological role, forms an intersubunit bridge (bridge B4) with the 23S rRNA of the 50S subunit in the ribosome. The polypeptide is Small ribosomal subunit protein uS15 (Bordetella parapertussis (strain 12822 / ATCC BAA-587 / NCTC 13253)).